The following is a 404-amino-acid chain: Cytoplasmic tRNA 2-thiolation protein 2 (404 aa).

It belongs to the CTU2/NCS2 family.

Its subcellular location is the cytoplasm. It participates in tRNA modification; 5-methoxycarbonylmethyl-2-thiouridine-tRNA biosynthesis. Functionally, plays a central role in 2-thiolation of mcm(5)S(2)U at tRNA wobble positions of tRNA(Lys), tRNA(Glu) and tRNA(Gln). May act by forming a heterodimer with NCS6/CTU1 that ligates sulfur from thiocarboxylated URM1 onto the uridine of tRNAs at wobble position. This is Cytoplasmic tRNA 2-thiolation protein 2 from Drosophila mojavensis (Fruit fly).